Consider the following 240-residue polypeptide: Ribitol-5-phosphate cytidylyltransferase (240 aa).

Residues 8-11 and 81-87 each bind CTP; these read FAGG and GETGQMS.

Belongs to the IspD/TarI cytidylyltransferase family. TarI subfamily.

It catalyses the reaction D-ribitol 5-phosphate + CTP + H(+) = CDP-L-ribitol + diphosphate. Its pathway is cell wall biogenesis; poly(ribitol phosphate) teichoic acid biosynthesis. In terms of biological role, catalyzes the transfer of the cytidylyl group of CTP to D-ribitol 5-phosphate. The protein is Ribitol-5-phosphate cytidylyltransferase of Streptococcus agalactiae serotype V (strain ATCC BAA-611 / 2603 V/R).